The sequence spans 266 residues: Putative carbamate hydrolase RutD (266 aa).

It belongs to the AB hydrolase superfamily. Hydrolase RutD family.

It carries out the reaction carbamate + 2 H(+) = NH4(+) + CO2. Functionally, involved in pyrimidine catabolism. May facilitate the hydrolysis of carbamate, a reaction that can also occur spontaneously. The polypeptide is Putative carbamate hydrolase RutD (Escherichia coli O26:H11 (strain 11368 / EHEC)).